Here is a 259-residue protein sequence, read N- to C-terminus: Pyrroloquinoline-quinone synthase (259 aa).

Belongs to the PqqC family.

It catalyses the reaction 6-(2-amino-2-carboxyethyl)-7,8-dioxo-1,2,3,4,7,8-hexahydroquinoline-2,4-dicarboxylate + 3 O2 = pyrroloquinoline quinone + 2 H2O2 + 2 H2O + H(+). Its pathway is cofactor biosynthesis; pyrroloquinoline quinone biosynthesis. In terms of biological role, ring cyclization and eight-electron oxidation of 3a-(2-amino-2-carboxyethyl)-4,5-dioxo-4,5,6,7,8,9-hexahydroquinoline-7,9-dicarboxylic-acid to PQQ. The protein is Pyrroloquinoline-quinone synthase of Bradyrhizobium sp. (strain ORS 278).